The primary structure comprises 652 residues: DNA ligase (652 aa).

Residues 29 to 33 (DSEYD), 78 to 79 (SL), and Glu-107 each bind NAD(+). Lys-109 (N6-AMP-lysine intermediate) is an active-site residue. 4 residues coordinate NAD(+): Arg-130, Glu-164, Lys-278, and Lys-302. Zn(2+) contacts are provided by Cys-395, Cys-398, Cys-413, and Cys-418. In terms of domain architecture, BRCT spans 577–652 (DRQAELFGLT…IEDEDWLLNL (76 aa)).

It belongs to the NAD-dependent DNA ligase family. LigA subfamily. Mg(2+) serves as cofactor. The cofactor is Mn(2+).

The catalysed reaction is NAD(+) + (deoxyribonucleotide)n-3'-hydroxyl + 5'-phospho-(deoxyribonucleotide)m = (deoxyribonucleotide)n+m + AMP + beta-nicotinamide D-nucleotide.. Its function is as follows. DNA ligase that catalyzes the formation of phosphodiester linkages between 5'-phosphoryl and 3'-hydroxyl groups in double-stranded DNA using NAD as a coenzyme and as the energy source for the reaction. It is essential for DNA replication and repair of damaged DNA. This chain is DNA ligase, found in Streptococcus equi subsp. zooepidemicus (strain MGCS10565).